The following is a 366-amino-acid chain: Actin-like protein 8 (366 aa).

The protein belongs to the actin family. As to expression, strongly expressed in testis and pancreas. Weak expression in placenta.

It is found in the cytoplasm. Its subcellular location is the cytoskeleton. This chain is Actin-like protein 8 (ACTL8), found in Homo sapiens (Human).